Consider the following 175-residue polypeptide: Vitamin K epoxide reductase complex subunit 1-like protein 1 (175 aa).

Residues 1–12 (MAAPVLRVSTPR) lie on the Cytoplasmic side of the membrane. Residues 13-35 (WERIARVLVCLLGILLSLYAFHV) form a helical membrane-spanning segment. The Lumenal segment spans residues 36–86 (EREHARDPSYKALCDVSSSISCSKVFGSRWGRGFGLLGSIFGNDSALNQPN). A disulfide bridge connects residues Cys-49 and Cys-57. Position 86 (Asn-86) interacts with (S)-warfarin. Residues 87-101 (SVYGIVFYAFQLLLG) traverse the membrane as a helical segment. Over 102–106 (MTVSA) the chain is Cytoplasmic. The chain crosses the membrane as a helical span at residues 107–134 (MAALILMTTSIMSVVGSLYLGYILYFVL). Topologically, residues 135 to 137 (KDL) are lumenal. The cysteines at positions 138 and 141 are disulfide-linked. Residues 138 to 159 (CVICVTTYALNFILFVLNYKRL) form a helical membrane-spanning segment. Positions 141 and 145 each coordinate phylloquinone. Position 145 (Tyr-145) interacts with (S)-warfarin. Residues 160 to 175 (VYLNEAWKQKLQAKQD) lie on the Cytoplasmic side of the membrane.

This sequence belongs to the VKOR family.

The protein resides in the endoplasmic reticulum membrane. The catalysed reaction is phylloquinone + [protein]-disulfide + H2O = 2,3-epoxyphylloquinone + [protein]-dithiol. It carries out the reaction phylloquinol + [protein]-disulfide = phylloquinone + [protein]-dithiol. Inhibited by warfarin (coumadin). Warfarin locks VKORC1 in both redox states into the closed conformation. Functionally, involved in vitamin K metabolism. Can reduce inactive vitamin K 2,3-epoxide to active vitamin K, and may contribute to vitamin K-mediated protection against oxidative stress. Plays a role in vitamin K-dependent gamma-carboxylation of Glu residues in target proteins. In Takifugu rubripes (Japanese pufferfish), this protein is Vitamin K epoxide reductase complex subunit 1-like protein 1 (vkorc1l1).